The following is a 295-amino-acid chain: Small ribosomal subunit protein uS2B (295 aa).

Serine 2 carries the N-acetylserine modification. The tract at residues 54–113 (TWEKLLLAARAIVAIENPADVSVISSRNTGQRAVLKFAAATGATPIAGRFTPGTFTNQIQ) is interaction with PPP1R16B. 2 laminin-binding regions span residues 161 to 180 (IPCN…MLAR) and 205 to 229 (RDPE…EFQG). Residues 218–227 (AEKAVTKEEF) show a composition bias toward basic and acidic residues. Residues 218–242 (AEKAVTKEEFQGEWTAPSPEFTATQ) are disordered. [DE]-W-[ST] repeat units follow at residues 230-232 (EWT), 247-249 (DWS), 266-268 (DWS), 275-277 (DWS), and 293-295 (DWS). The laminin-binding stretch occupies residues 242–295 (QPEVADWSEGVQVPSVPIQQFPTEDWSAQPATEDWSAAPTAQATEWVGATTDWS). A disordered region spans residues 266-295 (DWSAQPATEDWSAAPTAQATEWVGATTDWS).

This sequence belongs to the universal ribosomal protein uS2 family. As to quaternary structure, monomer (37LRP) and homodimer (67LR). Component of the small ribosomal subunit. Mature ribosomes consist of a small (40S) and a large (60S) subunit. The 40S subunit contains about 33 different proteins and 1 molecule of RNA (18S). The 60S subunit contains about 49 different proteins and 3 molecules of RNA (28S, 5.8S and 5S). Interacts with RPS21. Interacts with several laminins including at least LAMB1. Interacts with MDK. The mature dimeric form interacts with PPP1R16B (via its fourth ankyrin repeat). Interacts with PPP1CA only in the presence of PPP1R16B. In terms of processing, acylated. Acylation may be a prerequisite for conversion of the monomeric 37 kDa laminin receptor precursor (37LRP) to the mature dimeric 67 kDa laminin receptor (67LR), and may provide a mechanism for membrane association. Post-translationally, cleaved by stromelysin-3 (ST3) at the cell surface. Cleavage by stromelysin-3 may be a mechanism to alter cell-extracellular matrix interactions.

The protein resides in the cell membrane. Its subcellular location is the cytoplasm. The protein localises to the nucleus. In terms of biological role, required for the assembly and/or stability of the 40S ribosomal subunit. Required for the processing of the 20S rRNA-precursor to mature 18S rRNA in a late step of the maturation of 40S ribosomal subunits. Also functions as a cell surface receptor for laminin. Plays a role in cell adhesion to the basement membrane and in the consequent activation of signaling transduction pathways. May play a role in cell fate determination and tissue morphogenesis. Also acts as a receptor for several other ligands, including the pathogenic prion protein, viruses, and bacteria. Acts as a PPP1R16B-dependent substrate of PPP1CA. This Homo sapiens (Human) protein is Small ribosomal subunit protein uS2B.